The sequence spans 475 residues: Ribulose bisphosphate carboxylase large chain (475 aa).

A propeptide spanning residues 1–2 (MS) is cleaved from the precursor. N-acetylproline is present on P3. K14 bears the N6,N6,N6-trimethyllysine mark. The substrate site is built by N123 and T173. The Proton acceptor role is filled by K175. K177 serves as a coordination point for substrate. K201, D203, and E204 together coordinate Mg(2+). K201 carries the post-translational modification N6-carboxylysine. H294 functions as the Proton acceptor in the catalytic mechanism. R295, H327, and S379 together coordinate substrate.

It belongs to the RuBisCO large chain family. Type I subfamily. Heterohexadecamer of 8 large chains and 8 small chains; disulfide-linked. The disulfide link is formed within the large subunit homodimers. The cofactor is Mg(2+). The disulfide bond which can form in the large chain dimeric partners within the hexadecamer appears to be associated with oxidative stress and protein turnover.

It is found in the plastid. It localises to the chloroplast. The enzyme catalyses 2 (2R)-3-phosphoglycerate + 2 H(+) = D-ribulose 1,5-bisphosphate + CO2 + H2O. It catalyses the reaction D-ribulose 1,5-bisphosphate + O2 = 2-phosphoglycolate + (2R)-3-phosphoglycerate + 2 H(+). In terms of biological role, ruBisCO catalyzes two reactions: the carboxylation of D-ribulose 1,5-bisphosphate, the primary event in carbon dioxide fixation, as well as the oxidative fragmentation of the pentose substrate in the photorespiration process. Both reactions occur simultaneously and in competition at the same active site. The sequence is that of Ribulose bisphosphate carboxylase large chain from Alnus incana (White alder).